The chain runs to 283 residues: Pantothenate synthetase (283 aa).

ATP is bound at residue 30 to 37; sequence MGTLHDGH. His37 acts as the Proton donor in catalysis. (R)-pantoate is bound at residue Gln61. Residue Gln61 coordinates beta-alanine. Residue 148 to 151 participates in ATP binding; sequence GLKD. Gln154 is a binding site for (R)-pantoate. An ATP-binding site is contributed by 185–188; that stretch reads MSSR.

The protein belongs to the pantothenate synthetase family. As to quaternary structure, homodimer.

It is found in the cytoplasm. It carries out the reaction (R)-pantoate + beta-alanine + ATP = (R)-pantothenate + AMP + diphosphate + H(+). Its pathway is cofactor biosynthesis; (R)-pantothenate biosynthesis; (R)-pantothenate from (R)-pantoate and beta-alanine: step 1/1. Functionally, catalyzes the condensation of pantoate with beta-alanine in an ATP-dependent reaction via a pantoyl-adenylate intermediate. In Leptospira biflexa serovar Patoc (strain Patoc 1 / Ames), this protein is Pantothenate synthetase.